The sequence spans 96 residues: Bacterial microcompartment shell protein EutM (96 aa).

The region spanning 3–87 (ALGMIETRGL…PHGDLEEVFP (85 aa)) is the BMC domain.

The protein belongs to the bacterial microcompartments protein family. As to quaternary structure, homohexamer with a central pore of up to 8.6 Angstroms diameter. The hexamers pack into a two-dimensional array. Interacts with EutQ; a probably cytoplasm-facing helix (Val-49 to Gln-64) interacts with N-terminus of EutQ.

It localises to the bacterial microcompartment. It functions in the pathway amine and polyamine degradation; ethanolamine degradation. In terms of biological role, probably a major component of the bacterial microcompartment (BMC) shell dedicated to ethanolamine degradation. Each homohexamer has a central pore with an opening of up to 8.6 Angstroms. A positively-charged funnel leads to the pore from each side of the hexamer. The pore probably allows metabolite passage into and out of the BMC. Expression of eutK, eutL, eutM, eutN, eutS (eutSMNLK) in E.coli leads to formation of a single BMC. Expression alone leads to thick filaments that interfere with cell separation. Coexpression of eutQ with eutSMNLK permits E.coli to make cells with more than one mobile BMC, as is usual in vivo. May play a role in BMC shell biogenesis. Can replace homolog pduA in the pdu operon, cells grow better than wild-type on 1,2-propanediol and vitamin B12. Protein is incorporated into the pdu BMC microcompartment. The ethanolamine (EA) catabolic bacterial microcompartment (BMC) probably concentrates low levels of ethanolamine catabolic enzymes, concentrates volatile reaction intermediates, keeps the level of toxic acetaldehyde low, generates enough acetyl-CoA to support cell growth, and maintains a pool of free coenzyme A (CoA) and NAD. Deletion of BMC genes (eutK, eutL, eutM) restores growth of eutD deletions, suggesting there are dedicated pools of coenzyme A (CoA) and NAD in the BMC. Functionally, expression of the eut operon allows this bacteria to use ethanolamine as a carbon, nitrogen and energy source. It relies on cobalamin (vitamin B12) both as a cofactor for the ethanolamine ammonia-lyase (EAL) activity and to induce the operon. EA enhances bacterial survival in macrophages in a concentration-dependent manner, suggesting it is an important nutrient during infection. The polypeptide is Bacterial microcompartment shell protein EutM (Salmonella typhimurium (strain LT2 / SGSC1412 / ATCC 700720)).